Reading from the N-terminus, the 197-residue chain is ATP-dependent Clp protease proteolytic subunit (197 aa).

S98 functions as the Nucleophile in the catalytic mechanism. H123 is an active-site residue.

Belongs to the peptidase S14 family. As to quaternary structure, fourteen ClpP subunits assemble into 2 heptameric rings which stack back to back to give a disk-like structure with a central cavity, resembling the structure of eukaryotic proteasomes.

It is found in the cytoplasm. The enzyme catalyses Hydrolysis of proteins to small peptides in the presence of ATP and magnesium. alpha-casein is the usual test substrate. In the absence of ATP, only oligopeptides shorter than five residues are hydrolyzed (such as succinyl-Leu-Tyr-|-NHMec, and Leu-Tyr-Leu-|-Tyr-Trp, in which cleavage of the -Tyr-|-Leu- and -Tyr-|-Trp bonds also occurs).. Cleaves peptides in various proteins in a process that requires ATP hydrolysis. Has a chymotrypsin-like activity. Plays a major role in the degradation of misfolded proteins. This is ATP-dependent Clp protease proteolytic subunit from Pediococcus pentosaceus (strain ATCC 25745 / CCUG 21536 / LMG 10740 / 183-1w).